A 451-amino-acid polypeptide reads, in one-letter code: F-box only protein 47 (451 aa).

The F-box domain maps to 41-91 (LGNFKVLPLEILHIILRYLSVKDIGMLSMVSKTVSQHIINYISTSSGSRRL).

As to quaternary structure, part of a SCF (SKP1-cullin-F-box) protein ligase complex.

Its function is as follows. Probably recognizes and binds to some phosphorylated proteins and promotes their ubiquitination and degradation. This chain is F-box only protein 47 (Fbxo47), found in Mus musculus (Mouse).